Here is a 259-residue protein sequence, read N- to C-terminus: Type III pantothenate kinase (259 aa).

6 to 13 is a binding site for ATP; that stretch reads DVGNTNIV. Residues Tyr100 and 107-110 each bind substrate; that span reads GADR. The Proton acceptor role is filled by Asp109. Residue Asp129 coordinates K(+). Thr132 provides a ligand contact to ATP. Thr184 is a binding site for substrate.

Belongs to the type III pantothenate kinase family. As to quaternary structure, homodimer. NH4(+) serves as cofactor. It depends on K(+) as a cofactor.

The protein localises to the cytoplasm. It carries out the reaction (R)-pantothenate + ATP = (R)-4'-phosphopantothenate + ADP + H(+). It participates in cofactor biosynthesis; coenzyme A biosynthesis; CoA from (R)-pantothenate: step 1/5. Its function is as follows. Catalyzes the phosphorylation of pantothenate (Pan), the first step in CoA biosynthesis. The protein is Type III pantothenate kinase of Clostridium perfringens (strain ATCC 13124 / DSM 756 / JCM 1290 / NCIMB 6125 / NCTC 8237 / Type A).